A 105-amino-acid chain; its full sequence is Large ribosomal subunit protein uL24 (105 aa).

This sequence belongs to the universal ribosomal protein uL24 family. Part of the 50S ribosomal subunit.

Its function is as follows. One of two assembly initiator proteins, it binds directly to the 5'-end of the 23S rRNA, where it nucleates assembly of the 50S subunit. One of the proteins that surrounds the polypeptide exit tunnel on the outside of the subunit. The polypeptide is Large ribosomal subunit protein uL24 (Thermotoga maritima (strain ATCC 43589 / DSM 3109 / JCM 10099 / NBRC 100826 / MSB8)).